The sequence spans 425 residues: Polyribonucleotide 5'-hydroxyl-kinase Clp1 (425 aa).

Residues E22, K62, and 124-129 (DVGKST) each bind ATP.

Belongs to the Clp1 family. Clp1 subfamily. In terms of assembly, component of the tRNA splicing endonuclease complex, composed of CLP1, TSEN2, TSEN15, TSEN34 and TSEN54. Component of pre-mRNA cleavage complex II (CF-II). Also associates with numerous components of the pre-mRNA cleavage complex I (CF-I/CFIm), including NUDT21, CPSF2, CPSF3, CPSF6 and CPSF7. Interacts with CSTF2 and SYMPK. Requires Mg(2+) as cofactor. Mn(2+) serves as cofactor. The cofactor is Ni(2+).

The protein localises to the nucleus. The enzyme catalyses a 5'-end dephospho-2'-deoxyribonucleoside-DNA + ATP = a 5'-end 5'-phospho-2'-deoxyribonucleoside-DNA + ADP + H(+). It catalyses the reaction a 5'-end dephospho-ribonucleoside-RNA + ATP = a 5'-end 5'-phospho-ribonucleoside-RNA + ADP + H(+). Its function is as follows. Polynucleotide kinase that can phosphorylate the 5'-hydroxyl groups of double-stranded RNA (dsRNA), single-stranded RNA (ssRNA), double-stranded DNA (dsDNA) and double-stranded DNA:RNA hybrids. dsRNA is phosphorylated more efficiently than dsDNA, and the RNA component of a DNA:RNA hybrid is phosphorylated more efficiently than the DNA component. Plays a key role in both tRNA splicing and mRNA 3'-end formation. Component of the tRNA splicing endonuclease complex: phosphorylates the 5'-terminus of the tRNA 3'-exon during tRNA splicing; this phosphorylation event is a prerequisite for the subsequent ligation of the two exon halves and the production of a mature tRNA. Its role in tRNA splicing and maturation is required for cerebellar development. Component of the pre-mRNA cleavage complex II (CF-II), which seems to be required for mRNA 3'-end formation. Also phosphorylates the 5'-terminus of exogenously introduced short interfering RNAs (siRNAs), which is a necessary prerequisite for their incorporation into the RNA-induced silencing complex (RISC). However, endogenous siRNAs and microRNAs (miRNAs) that are produced by the cleavage of dsRNA precursors by DICER1 already contain a 5'-phosphate group, so this protein may be dispensible for normal RNA-mediated gene silencing. This chain is Polyribonucleotide 5'-hydroxyl-kinase Clp1, found in Bos taurus (Bovine).